Reading from the N-terminus, the 196-residue chain is uncharacterized protein (196 aa).

This is an uncharacterized protein from Aquifex aeolicus (strain VF5).